We begin with the raw amino-acid sequence, 692 residues long: Glycogen phosphorylase (692 aa).

An N6-(pyridoxal phosphate)lysine modification is found at K586.

The protein belongs to the glycogen phosphorylase family. Pyridoxal 5'-phosphate is required as a cofactor.

It catalyses the reaction [(1-&gt;4)-alpha-D-glucosyl](n) + phosphate = [(1-&gt;4)-alpha-D-glucosyl](n-1) + alpha-D-glucose 1-phosphate. Phosphorylase is an important allosteric enzyme in carbohydrate metabolism. Enzymes from different sources differ in their regulatory mechanisms and in their natural substrates. However, all known phosphorylases share catalytic and structural properties. This is Glycogen phosphorylase (glgP) from Aquifex aeolicus (strain VF5).